The chain runs to 219 residues: Small ribosomal subunit protein uS3 (219 aa).

The KH type-2 domain maps to 41–110; sequence IRKIINTEYS…DVSINICEVK (70 aa).

It belongs to the universal ribosomal protein uS3 family. Part of the 30S ribosomal subunit. Forms a tight complex with proteins S10 and S14.

Its function is as follows. Binds the lower part of the 30S subunit head. Binds mRNA in the 70S ribosome, positioning it for translation. This is Small ribosomal subunit protein uS3 from Orientia tsutsugamushi (strain Ikeda) (Rickettsia tsutsugamushi).